Reading from the N-terminus, the 213-residue chain is RPW8-like protein 3 (213 aa).

Residues 1-153 form the RPW8 domain; it reads MPVSEIMAGA…ITRQPTDCIC (153 aa). The helical transmembrane segment at 7 to 23 threads the bilayer; it reads MAGAALGLALQVLHDAI. 2 coiled-coil regions span residues 70-93 and 125-147; these read EDLKHLLEKAVSLVEAYAELRRRN and VDIKELMAKMSEMNTKLDEITRQ. The N-linked (GlcNAc...) asparagine glycan is linked to Asn157.

Belongs to the plant RPW8 protein family.

The protein localises to the membrane. Its function is as follows. Probable disease resistance (R) protein. The chain is RPW8-like protein 3 from Arabidopsis thaliana (Mouse-ear cress).